The primary structure comprises 336 residues: Dihydroorotate dehydrogenase (quinone) (336 aa).

FMN is bound by residues 62-66 (AGLDK) and threonine 86. Lysine 66 provides a ligand contact to substrate. A substrate-binding site is contributed by 111–115 (NRMGF). FMN-binding residues include asparagine 139 and asparagine 172. Asparagine 172 lines the substrate pocket. Residue serine 175 is the Nucleophile of the active site. Asparagine 177 contributes to the substrate binding site. FMN is bound by residues lysine 217 and threonine 245. Residue 246–247 (NT) coordinates substrate. Residues glycine 268, glycine 297, and 318-319 (YT) contribute to the FMN site.

This sequence belongs to the dihydroorotate dehydrogenase family. Type 2 subfamily. In terms of assembly, monomer. Requires FMN as cofactor.

It localises to the cell membrane. The catalysed reaction is (S)-dihydroorotate + a quinone = orotate + a quinol. The protein operates within pyrimidine metabolism; UMP biosynthesis via de novo pathway; orotate from (S)-dihydroorotate (quinone route): step 1/1. Its function is as follows. Catalyzes the conversion of dihydroorotate to orotate with quinone as electron acceptor. The protein is Dihydroorotate dehydrogenase (quinone) of Pseudoalteromonas translucida (strain TAC 125).